Here is a 404-residue protein sequence, read N- to C-terminus: Activity-regulated cytoskeleton-associated protein (404 aa).

Residues 51-78 (EVSKQVERELKGLQKSVGKLENNLEDHV) are a coiled coil. The tract at residues 351–404 (VQGNMDHSEEPSPQRTPEIQSGDSVESMPPSTTASPVPSNGTQPEPPSPPATVI) is disordered. The span at 363 to 393 (PQRTPEIQSGDSVESMPPSTTASPVPSNGTQ) shows a compositional bias: polar residues. Over residues 394–404 (PEPPSPPATVI) the composition is skewed to pro residues.

It belongs to the ARC/ARG3.1 family. Homooligomer; homooligomerizes into virion-like capsids. Post-translationally, palmitoylation anchors the protein into the membrane by allowing direct insertion into the hydrophobic core of the lipid bilayer. In terms of tissue distribution, expressed at various levels throughout the brain.

It localises to the extracellular vesicle membrane. Its subcellular location is the postsynaptic cell membrane. It is found in the synapse. The protein resides in the postsynaptic density. The protein localises to the early endosome membrane. It localises to the cell projection. Its subcellular location is the dendrite. It is found in the cytoplasm. The protein resides in the cytoskeleton. The protein localises to the cell cortex. It localises to the dendritic spine. Its function is as follows. Master regulator of synaptic plasticity that self-assembles into virion-like capsids that encapsulate RNAs and mediate intercellular RNA transfer in the nervous system. ARC protein is released from neurons in extracellular vesicles that mediate the transfer of ARC mRNA into new target cells, where ARC mRNA can undergo activity-dependent translation. ARC capsids are endocytosed and are able to transfer ARC mRNA into the cytoplasm of neurons. Acts as a key regulator of synaptic plasticity: required for protein synthesis-dependent forms of long-term potentiation (LTP) and depression (LTD) and for the formation of long-term memory. Regulates synaptic plasticity by promoting endocytosis of AMPA receptors (AMPARs) in response to synaptic activity: this endocytic pathway maintains levels of surface AMPARs in response to chronic changes in neuronal activity through synaptic scaling, thereby contributing to neuronal homeostasis. Acts as a postsynaptic mediator of activity-dependent synapse elimination in the developing cerebellum by mediating elimination of surplus climbing fiber synapses. Accumulates at weaker synapses, probably to prevent their undesired enhancement. This suggests that ARC-containing virion-like capsids may be required to eliminate synaptic material. The sequence is that of Activity-regulated cytoskeleton-associated protein from Gallus gallus (Chicken).